A 278-amino-acid polypeptide reads, in one-letter code: Large ribosomal subunit protein uL24m (278 aa).

The KOW domain occupies 109-142 (FFPGDLVQVMVGKDKGRQGLVLTISRDSSEVVVD).

This sequence belongs to the universal ribosomal protein uL24 family.

The protein resides in the mitochondrion. The sequence is that of Large ribosomal subunit protein uL24m (mrpl-24) from Caenorhabditis briggsae.